A 641-amino-acid polypeptide reads, in one-letter code: NADH-ubiquinone oxidoreductase chain 5 (641 aa).

The next 17 helical transmembrane spans lie at 1-21, 33-53, 59-79, 83-103, 121-141, 175-195, 211-231, 243-263, 276-296, 303-322, 367-387, 405-425, 453-473, 476-496, 512-532, 564-584, and 621-641; these read MYLT…VIGR, SLSI…IVLL, ITIY…WAFY, ISIT…LYSI, LFTF…MFVG, VGDL…GSSD, ITIV…QLGL, TPVS…YLIL, LICV…TGLF, VIAY…LGLS, ILPF…ALPF, FLVT…ITAF, PLIM…IGYI, KHLS…VGTL, FGVQ…ALIV, WFDN…GGIF, and IPHY…SIFI.

The protein belongs to the complex I subunit 5 family.

It is found in the mitochondrion inner membrane. The catalysed reaction is a ubiquinone + NADH + 5 H(+)(in) = a ubiquinol + NAD(+) + 4 H(+)(out). Core subunit of the mitochondrial membrane respiratory chain NADH dehydrogenase (Complex I) that is believed to belong to the minimal assembly required for catalysis. Complex I functions in the transfer of electrons from NADH to the respiratory chain. The immediate electron acceptor for the enzyme is believed to be ubiquinone. The chain is NADH-ubiquinone oxidoreductase chain 5 (ND5) from Allomyces macrogynus.